The primary structure comprises 134 residues: MTEESTKENLGAPKSPTPVTMEKNPKREVVVTTGPLVSEVQLMAATGGAELSCYRCIIPFAVVVFITGIVVTAVAYSFNSHGSIISIFGLVLLSSGLFLLASSALCWKVRQRNKKVKRRESQTALVVNQRCLFA.

Residues 1 to 23 (MTEESTKENLGAPKSPTPVTMEK) are disordered. S15 carries the phosphoserine modification. A run of 2 helical transmembrane segments spans residues 56 to 76 (CIIP…AVAY) and 84 to 104 (IISI…ASSA). S121 is modified (phosphoserine).

Interacts (via C-terminus) with TRPA1 and TRPV1. Interacts with TASOR. In terms of tissue distribution, expressed in dorsal root ganglia. Expressed in neurons as well as nerve fiber bundles connecting ganglia and fibers innervating muscle layer of the gastric body, jejunum, and proximal colon. Expressed in arterial endothelial cells and neurons of the central nervous system and peripheral nervous system (at protein level). Expressed strongly in lung, weakly in brain, heart and muscle. Expressed in enteric neurons and vascular tissue in the muscularis propria of the gastrointestinal tract.

Its subcellular location is the cell membrane. It localises to the membrane. The protein localises to the perikaryon. The protein resides in the cytoplasm. It is found in the perinuclear region. Its subcellular location is the endoplasmic reticulum. In terms of biological role, plays a role during embryonic arterial endothelium differentiation and vascular morphogenesis through the ACVRL1 receptor-dependent signaling pathway upon stimulation by bone morphogenetic proteins, such as GDF2/BMP9 and BMP10. Involved in the regulation of nociception, acting as a modulator of the interaction between TRPA1 and TRPV1, two molecular sensors and mediators of pain signals in dorsal root ganglia (DRG) neurons. Mechanistically, it weakens their interaction, thereby releasing the inhibition of TRPA1 by TRPV1 and increasing the single-channel open probability of the TRPA1-TRPV1 complex. The chain is Transmembrane protein 100 (Tmem100) from Mus musculus (Mouse).